Consider the following 113-residue polypeptide: Protein ORF3 (113 aa).

2 hydrophobic regions span residues 1 to 21 (MGSP…CLCC) and 32 to 52 (AVVG…GLIL). The tract at residues 27 to 67 (ASRLAAVVGGATAVPAVVSGVTGLILSPSPSPIFIQPTPSL) is interaction with host HPX. Residues 47–71 (VTGLILSPSPSPIFIQPTPSLPMSF) form an interaction with the capsid protein region. The residue at position 70 (serine 70) is a Phosphoserine; by host. The interval 71-113 (FHNPGLELALDSRPAPLAPLGVTSPSAPPLPPVVDLPQLGLRR) is homodimerization, and interaction with host AMBP/bikunin. The disordered stretch occupies residues 89 to 113 (PLGVTSPSAPPLPPVVDLPQLGLRR). The interval 94–103 (SPSAPPLPPV) is interaction with host SRC, HCK, FYN, PIK3R3 and GRB2. A PTAP/PSAP motif motif is present at residues 95–98 (PSAP).

Belongs to the hepevirus ORF3 protein family. As to quaternary structure, forms homooligomers. Interacts with host SRC, HCK, FYN, PIK3R3 and GRB2 (via SH3 domain); binding does not activate the kinases. Interacts with host AMBP/bikunin and AMBP/alpha-1-microglobulin peptides. Interacts with host HPX/hemopexin. Interacts (when phosphorylated) with capsid protein ORF2. Interacts with host TSG101; this interaction plays a role in viral release from the host cell. Interacts with host SIRPA; this interaction down-regulates the phosphorylation of host IRF3. Post-translationally, palmitoylated in the N-terminus.

It localises to the host endoplasmic reticulum membrane. The protein resides in the host cytoplasm. Its subcellular location is the host cytoskeleton. The protein localises to the virion. It is found in the host cell membrane. Its function is as follows. Small multifunctional phosphoprotein involved in virion morphogenesis, egress and counteracting host innate immunity. Plays critical roles in the final steps of viral release by interacting with host TSG101, a member of the vacuolar protein-sorting pathway and using other cellular host proteins involved in vesicle formation pathway. Also acts as a viroporin and forms ion conductive pores allowing viral particle release. Impairs the generation of type I interferon by down-regulating host TLR3 and TLR7 as well as their downstream signaling pathways. Down-regulates the phosphorylation of host IRF3 via the interaction with host SIRP-alpha, thereby inhibiting IFN-I expression. Interacts with host microtubules. The sequence is that of Protein ORF3 from Bandicota bengalensis (lesser bandicoot rat).